The sequence spans 543 residues: Chaperonin GroEL (543 aa).

Residues 29–32 (TLGP), 86–90 (DGTTT), G413, 476–478 (NAA), and D492 each bind ATP.

This sequence belongs to the chaperonin (HSP60) family. Forms a cylinder of 14 subunits composed of two heptameric rings stacked back-to-back. Interacts with the co-chaperonin GroES.

The protein resides in the cytoplasm. It catalyses the reaction ATP + H2O + a folded polypeptide = ADP + phosphate + an unfolded polypeptide.. Functionally, together with its co-chaperonin GroES, plays an essential role in assisting protein folding. The GroEL-GroES system forms a nano-cage that allows encapsulation of the non-native substrate proteins and provides a physical environment optimized to promote and accelerate protein folding. This chain is Chaperonin GroEL, found in Streptococcus pyogenes serotype M5 (strain Manfredo).